A 347-amino-acid chain; its full sequence is Phenylalanine--tRNA ligase alpha subunit (347 aa).

Glu262 is a Mg(2+) binding site.

The protein belongs to the class-II aminoacyl-tRNA synthetase family. Phe-tRNA synthetase alpha subunit type 1 subfamily. As to quaternary structure, tetramer of two alpha and two beta subunits. Mg(2+) is required as a cofactor.

The protein localises to the cytoplasm. The enzyme catalyses tRNA(Phe) + L-phenylalanine + ATP = L-phenylalanyl-tRNA(Phe) + AMP + diphosphate + H(+). The sequence is that of Phenylalanine--tRNA ligase alpha subunit from Roseiflexus sp. (strain RS-1).